A 553-amino-acid chain; its full sequence is Urocanate hydratase (553 aa).

NAD(+) contacts are provided by residues 51–52, Q129, 175–177, E195, R200, 241–242, 262–266, 272–273, and Y321; these read GG, GMG, NA, QTSAH, and YL. Residue C409 is part of the active site. G491 provides a ligand contact to NAD(+).

Belongs to the urocanase family. Requires NAD(+) as cofactor.

The protein localises to the cytoplasm. The enzyme catalyses 4-imidazolone-5-propanoate = trans-urocanate + H2O. Its pathway is amino-acid degradation; L-histidine degradation into L-glutamate; N-formimidoyl-L-glutamate from L-histidine: step 2/3. Functionally, catalyzes the conversion of urocanate to 4-imidazolone-5-propionate. This Sphingopyxis alaskensis (strain DSM 13593 / LMG 18877 / RB2256) (Sphingomonas alaskensis) protein is Urocanate hydratase.